Consider the following 106-residue polypeptide: Large ribosomal subunit protein uL24 (106 aa).

A disordered region spans residues 1 to 20 (MNKRAKSKNREPLRKSPVKR). The span at 8–20 (KNREPLRKSPVKR) shows a compositional bias: basic and acidic residues.

Belongs to the universal ribosomal protein uL24 family. In terms of assembly, part of the 50S ribosomal subunit.

Its function is as follows. One of two assembly initiator proteins, it binds directly to the 5'-end of the 23S rRNA, where it nucleates assembly of the 50S subunit. Functionally, one of the proteins that surrounds the polypeptide exit tunnel on the outside of the subunit. The sequence is that of Large ribosomal subunit protein uL24 from Methylacidiphilum infernorum (isolate V4) (Methylokorus infernorum (strain V4)).